The following is a 258-amino-acid chain: MAKRIDVSGLTAYYGSHKAIEDISMTVEPRSVTAFIGPSGCGKSTFLRTLNRMHEVTPGGRVEGKVLLDDEDLYGQGIDPVSVRREVGMVFQRPNPFPTMSIFDNVAAGLRLNGSYKKSELSEIVEKSLKGANLWNEVKDRLNKPGSGLSGGQQQRLCIARAIAVEPNVLLMDEPCSALDPISTLAIEDLIGELKERFTIVIVTHNMQQAARVSDRTAFFNLAAVGQPGRLIEVDETERIFSNPSVQATEDYISGRFG.

The region spanning 5–247 is the ABC transporter domain; that stretch reads IDVSGLTAYY…ERIFSNPSVQ (243 aa). 37-44 contacts ATP; the sequence is GPSGCGKS.

It belongs to the ABC transporter superfamily. Phosphate importer (TC 3.A.1.7) family. The complex is composed of two ATP-binding proteins (PstB), two transmembrane proteins (PstC and PstA) and a solute-binding protein (PstS).

It localises to the cell membrane. It catalyses the reaction phosphate(out) + ATP + H2O = ADP + 2 phosphate(in) + H(+). Functionally, part of the ABC transporter complex PstSACB involved in phosphate import. Responsible for energy coupling to the transport system. This chain is Phosphate import ATP-binding protein PstB, found in Streptomyces avermitilis (strain ATCC 31267 / DSM 46492 / JCM 5070 / NBRC 14893 / NCIMB 12804 / NRRL 8165 / MA-4680).